We begin with the raw amino-acid sequence, 259 residues long: Indole-3-glycerol phosphate synthase (259 aa).

Belongs to the TrpC family.

The catalysed reaction is 1-(2-carboxyphenylamino)-1-deoxy-D-ribulose 5-phosphate + H(+) = (1S,2R)-1-C-(indol-3-yl)glycerol 3-phosphate + CO2 + H2O. The protein operates within amino-acid biosynthesis; L-tryptophan biosynthesis; L-tryptophan from chorismate: step 4/5. This Dehalococcoides mccartyi (strain ATCC BAA-2100 / JCM 16839 / KCTC 5957 / BAV1) protein is Indole-3-glycerol phosphate synthase.